The following is a 134-amino-acid chain: FK506-binding protein 2 (134 aa).

A signal peptide spans 1–19; it reads MRFSIFSTLLVSLATLSTA. One can recognise a PPIase FKBP-type domain in the interval 39–127; it reads GDTVQMHYKG…IFETELVGID (89 aa). Residues 131-134 carry the Prevents secretion from ER motif; sequence KDEL.

The protein belongs to the FKBP-type PPIase family. FKBP2 subfamily.

The protein resides in the endoplasmic reticulum. It catalyses the reaction [protein]-peptidylproline (omega=180) = [protein]-peptidylproline (omega=0). Its activity is regulated as follows. Inhibited by both FK506 and rapamycin. Its function is as follows. PPIases accelerate the folding of proteins. It catalyzes the cis-trans isomerization of proline imidic peptide bonds in oligopeptides. This Aspergillus oryzae (strain ATCC 42149 / RIB 40) (Yellow koji mold) protein is FK506-binding protein 2 (fpr2).